The sequence spans 382 residues: Transcription termination/antitermination protein NusA (382 aa).

The region spanning Glu135–Thr199 is the S1 motif domain. A KH domain is found at Glu301 to Asp367. Residues Leu348–Glu382 form a disordered region.

This sequence belongs to the NusA family. In terms of assembly, monomer. Binds directly to the core enzyme of the DNA-dependent RNA polymerase and to nascent RNA.

It localises to the cytoplasm. Its function is as follows. Participates in both transcription termination and antitermination. This chain is Transcription termination/antitermination protein NusA, found in Halalkalibacterium halodurans (strain ATCC BAA-125 / DSM 18197 / FERM 7344 / JCM 9153 / C-125) (Bacillus halodurans).